The primary structure comprises 244 residues: U4/U6.U5 tri-snRNP-associated protein 3-like protein C162.01c (244 aa).

Composition is skewed to basic and acidic residues over residues 1-11 (MSSSRSGEHRR) and 20-116 (ESSR…RRDG). 2 disordered regions span residues 1–192 (MSSS…EDEA) and 223–244 (KKTK…LDNE). Phosphoserine is present on residues S121 and S140. The span at 126-182 (GLERKREHEKLQAPSPKEEEERPVDQGDKMDGVKEDKDGSLEVGKSHDAMTRTKSAE) shows a compositional bias: basic and acidic residues. A compositionally biased stretch (acidic residues) spans 183–192 (EEIVEQEDEA).

Belongs to the SNUT3 family. Part of a tri-snRNP complex.

It is found in the nucleus. May play a role in mRNA splicing. This Schizosaccharomyces pombe (strain 972 / ATCC 24843) (Fission yeast) protein is U4/U6.U5 tri-snRNP-associated protein 3-like protein C162.01c.